A 278-amino-acid polypeptide reads, in one-letter code: 4-deoxy-L-threo-5-hexosulose-uronate ketol-isomerase (278 aa).

Residues His-196, His-198, Glu-203, and His-245 each coordinate Zn(2+).

This sequence belongs to the KduI family. Zn(2+) serves as cofactor.

It carries out the reaction 5-dehydro-4-deoxy-D-glucuronate = 3-deoxy-D-glycero-2,5-hexodiulosonate. It functions in the pathway glycan metabolism; pectin degradation; 2-dehydro-3-deoxy-D-gluconate from pectin: step 4/5. Its function is as follows. Catalyzes the isomerization of 5-dehydro-4-deoxy-D-glucuronate to 3-deoxy-D-glycero-2,5-hexodiulosonate. The protein is 4-deoxy-L-threo-5-hexosulose-uronate ketol-isomerase of Shigella boydii serotype 4 (strain Sb227).